The primary structure comprises 275 residues: tRNA (guanine-N(1)-)-methyltransferase (275 aa).

Residues Gly124 and 149–154 (IGDYVL) each bind S-adenosyl-L-methionine.

It belongs to the RNA methyltransferase TrmD family. In terms of assembly, homodimer.

The protein resides in the cytoplasm. The catalysed reaction is guanosine(37) in tRNA + S-adenosyl-L-methionine = N(1)-methylguanosine(37) in tRNA + S-adenosyl-L-homocysteine + H(+). Functionally, specifically methylates guanosine-37 in various tRNAs. In Bifidobacterium animalis subsp. lactis (strain AD011), this protein is tRNA (guanine-N(1)-)-methyltransferase.